Here is a 511-residue protein sequence, read N- to C-terminus: V-type proton ATPase subunit B, brain isoform (511 aa).

Arg-400 provides a ligand contact to ATP.

It belongs to the ATPase alpha/beta chains family. V-ATPase is a heteromultimeric enzyme made up of two complexes: the ATP-hydrolytic V1 complex and the proton translocation V0 complex. The V1 complex consists of three catalytic AB heterodimers that form a heterohexamer, three peripheral stalks each consisting of EG heterodimers, one central rotor including subunits D and F, and the regulatory subunits C and H. The proton translocation complex V0 consists of the proton transport subunit a, a ring of proteolipid subunits c9c'', rotary subunit d, subunits e and f, and the accessory subunits ATP6AP1/Ac45 and ATP6AP2/PRR.

The protein resides in the apical cell membrane. It is found in the melanosome. Its subcellular location is the cytoplasm. It localises to the cytoplasmic vesicle. The protein localises to the secretory vesicle. The protein resides in the synaptic vesicle membrane. It is found in the clathrin-coated vesicle membrane. Non-catalytic subunit of the V1 complex of vacuolar(H+)-ATPase (V-ATPase), a multisubunit enzyme composed of a peripheral complex (V1) that hydrolyzes ATP and a membrane integral complex (V0) that translocates protons. V-ATPase is responsible for acidifying and maintaining the pH of intracellular compartments and in some cell types, is targeted to the plasma membrane, where it is responsible for acidifying the extracellular environment. In renal intercalated cells, can partially compensate the lack of ATP6V1B1 and mediate secretion of protons (H+) into the urine under base-line conditions but not in conditions of acid load. This chain is V-type proton ATPase subunit B, brain isoform (ATP6V1B2), found in Pongo abelii (Sumatran orangutan).